Consider the following 557-residue polypeptide: Transcription factor fil1 (557 aa).

The tract at residues 234–258 (SPVKRELNDSTSPSKLSESSSSLTG) is disordered. The span at 243 to 258 (STSPSKLSESSSSLTG) shows a compositional bias: low complexity. 2 consecutive GATA-type zinc fingers follow at residues 365–390 (CFNC…CNAC) and 419–443 (CANC…CNAC).

The protein resides in the nucleus. The protein localises to the cytoplasm. In terms of biological role, activates genes required for amino acid biosynthesis and acts as a master transcriptional regulator during amino acid starvation. Binds variations of the DNA sequence 5'-GAT[AC]GC-3'. In Schizosaccharomyces pombe (strain 972 / ATCC 24843) (Fission yeast), this protein is Transcription factor fil1.